A 583-amino-acid chain; its full sequence is CTP synthase (583 aa).

Positions 1 to 278 (MRRHPQTATK…DAFVVRRLNL (278 aa)) are amidoligase domain. S20 is a binding site for CTP. S20 is a UTP binding site. ATP contacts are provided by residues 21 to 26 (SLGKGL) and D78. Residues D78 and E152 each coordinate Mg(2+). CTP-binding positions include 159-161 (DIE), 199-204 (KTKPTQ), and K235. UTP contacts are provided by residues 199 to 204 (KTKPTQ) and K235. Residues 303–551 (RIALVGKYVE…VKAAIDYKEG (249 aa)) enclose the Glutamine amidotransferase type-1 domain. G366 is an L-glutamine binding site. The active-site Nucleophile; for glutamine hydrolysis is the C393. L-glutamine is bound by residues 394-397 (LGLQ), E416, and R477. Active-site residues include H524 and E526. The interval 559–583 (PERVSNGAERRDQVGQSIPEPANRG) is disordered.

It belongs to the CTP synthase family. Homotetramer.

The catalysed reaction is UTP + L-glutamine + ATP + H2O = CTP + L-glutamate + ADP + phosphate + 2 H(+). The enzyme catalyses L-glutamine + H2O = L-glutamate + NH4(+). It catalyses the reaction UTP + NH4(+) + ATP = CTP + ADP + phosphate + 2 H(+). It participates in pyrimidine metabolism; CTP biosynthesis via de novo pathway; CTP from UDP: step 2/2. Allosterically activated by GTP, when glutamine is the substrate; GTP has no effect on the reaction when ammonia is the substrate. The allosteric effector GTP functions by stabilizing the protein conformation that binds the tetrahedral intermediate(s) formed during glutamine hydrolysis. Inhibited by the product CTP, via allosteric rather than competitive inhibition. Functionally, catalyzes the ATP-dependent amination of UTP to CTP with either L-glutamine or ammonia as the source of nitrogen. Regulates intracellular CTP levels through interactions with the four ribonucleotide triphosphates. The protein is CTP synthase of Mycobacterium marinum (strain ATCC BAA-535 / M).